Consider the following 356-residue polypeptide: Protein RecA (356 aa).

Position 79-86 (79-86) interacts with ATP; sequence GPESSGKT.

Belongs to the RecA family.

It localises to the cytoplasm. In terms of biological role, can catalyze the hydrolysis of ATP in the presence of single-stranded DNA, the ATP-dependent uptake of single-stranded DNA by duplex DNA, and the ATP-dependent hybridization of homologous single-stranded DNAs. It interacts with LexA causing its activation and leading to its autocatalytic cleavage. The chain is Protein RecA from Borrelia hermsii (strain HS1 / DAH).